We begin with the raw amino-acid sequence, 367 residues long: Chorismate synthase (367 aa).

The disordered stretch occupies residues 41 to 60 (FTHDLQRRASGKSRHTSARR). 2 residues coordinate NADP(+): arginine 48 and arginine 54. FMN contacts are provided by residues 125 to 127 (RSS), 238 to 239 (NA), glycine 278, 293 to 297 (KPTSS), and arginine 319.

The protein belongs to the chorismate synthase family. Homotetramer. Requires FMNH2 as cofactor.

It carries out the reaction 5-O-(1-carboxyvinyl)-3-phosphoshikimate = chorismate + phosphate. Its pathway is metabolic intermediate biosynthesis; chorismate biosynthesis; chorismate from D-erythrose 4-phosphate and phosphoenolpyruvate: step 7/7. Its function is as follows. Catalyzes the anti-1,4-elimination of the C-3 phosphate and the C-6 proR hydrogen from 5-enolpyruvylshikimate-3-phosphate (EPSP) to yield chorismate, which is the branch point compound that serves as the starting substrate for the three terminal pathways of aromatic amino acid biosynthesis. This reaction introduces a second double bond into the aromatic ring system. The polypeptide is Chorismate synthase (Xanthomonas euvesicatoria pv. vesicatoria (strain 85-10) (Xanthomonas campestris pv. vesicatoria)).